Consider the following 442-residue polypeptide: Putative ammonium transporter sll1017 (442 aa).

Transmembrane regions (helical) follow at residues 5–25 (NFPL…VGVA), 44–64 (LFLL…AMLE), 81–101 (TFDV…LMYG), 104–124 (PVLG…LDNV), 133–153 (WLFQ…AVMG), 155–175 (MYFK…YPIS), 193–213 (FAGS…AVVV), 240–260 (GVFI…LAFV), 269–289 (MLIA…ALAF), 299–319 (PNLL…TAGC), 325–345 (WSAI…TKLL), 354–374 (VGAW…VGIF), and 386–406 (IVGS…LFYV).

Belongs to the ammonia transporter channel (TC 1.A.11.2) family.

The protein localises to the cell membrane. This Synechocystis sp. (strain ATCC 27184 / PCC 6803 / Kazusa) protein is Putative ammonium transporter sll1017.